Consider the following 266-residue polypeptide: Cell division protein FtsQ (266 aa).

At 1–31 the chain is on the cytoplasmic side; that stretch reads MRQKTSSNKKKQKNTNNISLRRKLGLMYKKA. The helical transmembrane segment at 32–52 threads the bilayer; sequence ILGLKIVLMIFVCLFVFTKYF. Residues 53 to 266 lie on the Periplasmic side of the membrane; it reads TSIKTYLITN…DRNKYYIQKY (214 aa). A POTRA domain is found at 72 to 140; that stretch reads FRLENVIIEG…NTVYIKLFER (69 aa).

Belongs to the FtsQ/DivIB family. FtsQ subfamily.

It localises to the cell inner membrane. Its function is as follows. Essential cell division protein. This is Cell division protein FtsQ from Rickettsia typhi (strain ATCC VR-144 / Wilmington).